The chain runs to 603 residues: Golgin subfamily A member 8B (603 aa).

4 disordered regions span residues 1–82 (MAEE…NSRS), 95–125 (LKQQ…ELEG), 398–419 (TSAE…ESSG), and 460–492 (PGDS…GAAG). A compositionally biased stretch (low complexity) spans 46-66 (AASGGCHSSEASSSASSSLHA). A compositionally biased stretch (polar residues) spans 69–82 (SPCQEQAAVLNSRS). 2 coiled-coil regions span residues 82–173 (SIKI…GELE) and 212–440 (LKGH…LELG). Positions 100–124 (KQVEHQLEEEKKANNEKQKAERELE) are enriched in basic and acidic residues. Residues 469–482 (PGGGHHQAGPGQGG) are compositionally biased toward gly residues. A golgi-targeting domain region spans residues 491–603 (AGDGVAACGS…CWAWLPRRRR (113 aa)).

It belongs to the GOLGA8 family. As to expression, highly expressed in brain, heart and kidney. Detected at lower levels in liver, thymus, spleen, lung and peripheral blood leukocytes.

It is found in the golgi apparatus. The protein localises to the golgi stack membrane. May be involved in maintaining Golgi structure. The chain is Golgin subfamily A member 8B (GOLGA8B) from Homo sapiens (Human).